The sequence spans 166 residues: Putative signal peptidase complex catalytic subunit SEC11B (166 aa).

The Cytoplasmic portion of the chain corresponds to 1 to 6; that stretch reads MNKWRL. A helical; Signal-anchor for type II membrane protein membrane pass occupies residues 7 to 24; sequence YYQVLNFGMIVSSALMIW. Residues 25 to 166 are Extracellular-facing; the sequence is KGLMVITGSE…LGLFVLVHRE (142 aa). The active site involves serine 43.

It belongs to the peptidase S26B family.

The protein resides in the membrane. It catalyses the reaction Cleavage of hydrophobic, N-terminal signal or leader sequences from secreted and periplasmic proteins.. Putative component of some signal peptidase complex which removes signal peptides from nascent proteins as they are translocated into the lumen of the endoplasmic reticulum. The sequence is that of Putative signal peptidase complex catalytic subunit SEC11B (SEC11B) from Homo sapiens (Human).